Reading from the N-terminus, the 268-residue chain is Phosphatidylglycerol--prolipoprotein diacylglyceryl transferase (268 aa).

The next 4 helical transmembrane spans lie at 14 to 34 (LGPIKIHWYGLMYLLGIFAGW), 57 to 77 (LTFYVALGVILGGRIGYIIFY), 90 to 110 (FFLWDGGMSFHGGFIGVLIAF), and 117 to 137 (IGANFFDLGEFVAPVIPIGLG). R140 provides a ligand contact to a 1,2-diacyl-sn-glycero-3-phospho-(1'-sn-glycerol). The next 3 membrane-spanning stretches (helical) occupy residues 174–194 (QLFEFFFEGVVLFSVLWLVTI), 200–220 (YLVLGLFMFLYGCARFICEFF), and 240–260 (ILSIPMILLGAVILIAVFIKI).

This sequence belongs to the Lgt family.

The protein resides in the cell inner membrane. It catalyses the reaction L-cysteinyl-[prolipoprotein] + a 1,2-diacyl-sn-glycero-3-phospho-(1'-sn-glycerol) = an S-1,2-diacyl-sn-glyceryl-L-cysteinyl-[prolipoprotein] + sn-glycerol 1-phosphate + H(+). It participates in protein modification; lipoprotein biosynthesis (diacylglyceryl transfer). Functionally, catalyzes the transfer of the diacylglyceryl group from phosphatidylglycerol to the sulfhydryl group of the N-terminal cysteine of a prolipoprotein, the first step in the formation of mature lipoproteins. The polypeptide is Phosphatidylglycerol--prolipoprotein diacylglyceryl transferase (Francisella tularensis subsp. tularensis (strain FSC 198)).